A 404-amino-acid chain; its full sequence is Argininosuccinate synthase (404 aa).

ATP-binding positions include 10 to 18 and A38; that span reads AYSGGVDTS. Y89 lines the L-citrulline pocket. G119 lines the ATP pocket. Positions 121, 125, and 126 each coordinate L-aspartate. N125 lines the L-citrulline pocket. 5 residues coordinate L-citrulline: R129, S177, S186, E262, and Y274.

The protein belongs to the argininosuccinate synthase family. Type 1 subfamily. In terms of assembly, homotetramer.

The protein localises to the cytoplasm. The enzyme catalyses L-citrulline + L-aspartate + ATP = 2-(N(omega)-L-arginino)succinate + AMP + diphosphate + H(+). It participates in amino-acid biosynthesis; L-arginine biosynthesis; L-arginine from L-ornithine and carbamoyl phosphate: step 2/3. The polypeptide is Argininosuccinate synthase (Prochlorococcus marinus (strain AS9601)).